A 131-amino-acid chain; its full sequence is Small ribosomal subunit protein uS8 (131 aa).

This sequence belongs to the universal ribosomal protein uS8 family. As to quaternary structure, part of the 30S ribosomal subunit. Contacts proteins S5 and S12.

In terms of biological role, one of the primary rRNA binding proteins, it binds directly to 16S rRNA central domain where it helps coordinate assembly of the platform of the 30S subunit. The sequence is that of Small ribosomal subunit protein uS8 from Methylococcus capsulatus (strain ATCC 33009 / NCIMB 11132 / Bath).